The chain runs to 75 residues: Carwaprin-b (75 aa).

An N-terminal signal peptide occupies residues 1–24; sequence MSSGGLLLLLGLLTLWAELTPVSS. Residues 27 to 72 enclose the WAP domain; sequence RPKKPGLCPPRPQKPPCVRECKNDWRCPGEQKCCRYGCIYECRDPI. 4 disulfides stabilise this stretch: Cys34-Cys60, Cys43-Cys64, Cys47-Cys59, and Cys53-Cys68.

It belongs to the venom waprin family. Expressed by the venom gland.

Its subcellular location is the secreted. Functionally, damages membranes of susceptible bacteria. Has no hemolytic activity. Not toxic to mice. Does not inhibit the proteinases elastase and cathepsin G. This chain is Carwaprin-b, found in Tropidechis carinatus (Australian rough-scaled snake).